The following is a 179-amino-acid chain: Replication restart protein DnaT (179 aa).

Residues 156–179 form a disordered region; it reads GGLPKRDVNTVSEPDSQIPPGFRG.

It belongs to the DnaT family. In terms of assembly, homooligomerizes. Interacts with PriB. Component of the replication restart primosome. Primosome assembly occurs via a 'hand-off' mechanism. PriA binds to replication forks, subsequently PriB then DnaT bind; DnaT then displaces ssDNA to generate the helicase loading substrate.

In terms of biological role, involved in the restart of stalled replication forks, which reloads the replicative helicase on sites other than the origin of replication. Can function in multiple replication restart pathways. Displaces ssDNA from a PriB-ssDNA complex. Probably forms a spiral filament on ssDNA. In Shigella boydii serotype 18 (strain CDC 3083-94 / BS512), this protein is Replication restart protein DnaT.